The chain runs to 348 residues: Alcohol dehydrogenase 2 (348 aa).

N-acetylserine is present on serine 2. Zn(2+) contacts are provided by cysteine 44, histidine 67, cysteine 98, cysteine 101, cysteine 104, cysteine 112, and cysteine 154. NAD(+)-binding positions include 178 to 184 (GAAGGLG), aspartate 202, lysine 207, 269 to 271 (VGL), and arginine 341.

This sequence belongs to the zinc-containing alcohol dehydrogenase family. As to quaternary structure, homotetramer. Zn(2+) is required as a cofactor.

It is found in the cytoplasm. It catalyses the reaction a primary alcohol + NAD(+) = an aldehyde + NADH + H(+). The enzyme catalyses a secondary alcohol + NAD(+) = a ketone + NADH + H(+). The chain is Alcohol dehydrogenase 2 (ADH2) from Kluyveromyces marxianus (Yeast).